The primary structure comprises 212 residues: 3-isopropylmalate dehydratase small subunit (212 aa).

It belongs to the LeuD family. LeuD type 1 subfamily. In terms of assembly, heterodimer of LeuC and LeuD.

It catalyses the reaction (2R,3S)-3-isopropylmalate = (2S)-2-isopropylmalate. It participates in amino-acid biosynthesis; L-leucine biosynthesis; L-leucine from 3-methyl-2-oxobutanoate: step 2/4. Its function is as follows. Catalyzes the isomerization between 2-isopropylmalate and 3-isopropylmalate, via the formation of 2-isopropylmaleate. The sequence is that of 3-isopropylmalate dehydratase small subunit from Dechloromonas aromatica (strain RCB).